Reading from the N-terminus, the 345-residue chain is S-adenosylmethionine:tRNA ribosyltransferase-isomerase (345 aa).

This sequence belongs to the QueA family. As to quaternary structure, monomer.

The protein localises to the cytoplasm. The enzyme catalyses 7-aminomethyl-7-carbaguanosine(34) in tRNA + S-adenosyl-L-methionine = epoxyqueuosine(34) in tRNA + adenine + L-methionine + 2 H(+). Its pathway is tRNA modification; tRNA-queuosine biosynthesis. Transfers and isomerizes the ribose moiety from AdoMet to the 7-aminomethyl group of 7-deazaguanine (preQ1-tRNA) to give epoxyqueuosine (oQ-tRNA). The polypeptide is S-adenosylmethionine:tRNA ribosyltransferase-isomerase (Shewanella loihica (strain ATCC BAA-1088 / PV-4)).